The chain runs to 219 residues: Probable nicotinate-nucleotide adenylyltransferase (219 aa).

This sequence belongs to the NadD family.

It carries out the reaction nicotinate beta-D-ribonucleotide + ATP + H(+) = deamido-NAD(+) + diphosphate. The protein operates within cofactor biosynthesis; NAD(+) biosynthesis; deamido-NAD(+) from nicotinate D-ribonucleotide: step 1/1. Its function is as follows. Catalyzes the reversible adenylation of nicotinate mononucleotide (NaMN) to nicotinic acid adenine dinucleotide (NaAD). This chain is Probable nicotinate-nucleotide adenylyltransferase, found in Enterococcus faecalis (strain ATCC 700802 / V583).